A 116-amino-acid chain; its full sequence is NADPH-dependent 7-cyano-7-deazaguanine reductase (116 aa).

Cys-31 functions as the Thioimide intermediate in the catalytic mechanism. The active-site Proton donor is the Asp-38. Substrate contacts are provided by residues 53–55 (IEL) and 72–73 (YE).

It belongs to the GTP cyclohydrolase I family. QueF type 1 subfamily.

It localises to the cytoplasm. It catalyses the reaction 7-aminomethyl-7-carbaguanine + 2 NADP(+) = 7-cyano-7-deazaguanine + 2 NADPH + 3 H(+). It participates in tRNA modification; tRNA-queuosine biosynthesis. Catalyzes the NADPH-dependent reduction of 7-cyano-7-deazaguanine (preQ0) to 7-aminomethyl-7-deazaguanine (preQ1). This Chlorobaculum parvum (strain DSM 263 / NCIMB 8327) (Chlorobium vibrioforme subsp. thiosulfatophilum) protein is NADPH-dependent 7-cyano-7-deazaguanine reductase.